A 363-amino-acid chain; its full sequence is DNA replication and repair protein RecF (363 aa).

30 to 37 (GPNGSGKT) is an ATP binding site.

This sequence belongs to the RecF family.

The protein localises to the cytoplasm. Its function is as follows. The RecF protein is involved in DNA metabolism; it is required for DNA replication and normal SOS inducibility. RecF binds preferentially to single-stranded, linear DNA. It also seems to bind ATP. The polypeptide is DNA replication and repair protein RecF (Vibrio cholerae serotype O1 (strain ATCC 39541 / Classical Ogawa 395 / O395)).